The sequence spans 246 residues: TVP38/TMEM64 family membrane protein MT0653 (246 aa).

5 helical membrane-spanning segments follow: residues 19-39 (LVVFAGFLVGMFYLVAATDVI), 57-77 (LTYVVVSAVLGALFVPGPILA), 83-103 (LFGPLVGVFVTLGATVGTAVV), 157-177 (AFGTFGVPLWQMAVGAFIGSA), and 196-216 (LLASCAIAVWCVTAIIGAFAA).

The protein belongs to the TVP38/TMEM64 family.

Its subcellular location is the cell membrane. The protein is TVP38/TMEM64 family membrane protein MT0653 of Mycobacterium tuberculosis (strain CDC 1551 / Oshkosh).